Here is a 126-residue protein sequence, read N- to C-terminus: Histone H2B type 1-O (126 aa).

Low complexity predominate over residues 1–12 (MPDPAKSAPAPK). The disordered stretch occupies residues 1–35 (MPDPAKSAPAPKKGSKKAVTKAQKKDGKKRKRSRK). An N-acetylproline; partial modification is found at P2. An N6-(2-hydroxyisobutyryl)lysine; alternate modification is found at K6. K6 carries the N6-(beta-hydroxybutyryl)lysine; alternate modification. K6 carries the N6-acetyllysine; alternate modification. N6-butyryllysine; alternate is present on K6. An N6-crotonyllysine; alternate modification is found at K6. K6 carries the post-translational modification N6-lactoyllysine; alternate. K6 participates in a covalent cross-link: Glycyl lysine isopeptide (Lys-Gly) (interchain with G-Cter in SUMO2); alternate. ADP-ribosylserine is present on S7. K12 carries the N6-(beta-hydroxybutyryl)lysine; alternate modification. K12 and K13 each carry N6-acetyllysine; alternate. N6-crotonyllysine; alternate occurs at positions 12 and 13. K12 carries the post-translational modification N6-lactoyllysine; alternate. K13 is modified (N6-(2-hydroxyisobutyryl)lysine; alternate). S15 is modified (phosphoserine; by STK4/MST1). N6-acetyllysine; alternate is present on residues K16, K17, K21, and K24. N6-crotonyllysine; alternate is present on residues K16, K17, K21, and K24. N6-lactoyllysine; alternate occurs at positions 16, 17, 21, and 24. An N6-(beta-hydroxybutyryl)lysine; alternate mark is found at K17 and K21. At K17 the chain carries N6-glutaryllysine; alternate. Residues K21 and K24 each carry the N6-(2-hydroxyisobutyryl)lysine; alternate modification. K21 is modified (N6-butyryllysine; alternate). K21 participates in a covalent cross-link: Glycyl lysine isopeptide (Lys-Gly) (interchain with G-Cter in SUMO2); alternate. Position 25 is an N6-(2-hydroxyisobutyryl)lysine (K25). An N6-(2-hydroxyisobutyryl)lysine; alternate modification is found at K35. At K35 the chain carries N6-(beta-hydroxybutyryl)lysine; alternate. Position 35 is an N6-crotonyllysine; alternate (K35). N6-glutaryllysine; alternate is present on K35. K35 bears the N6-succinyllysine; alternate mark. A Glycyl lysine isopeptide (Lys-Gly) (interchain with G-Cter in ubiquitin); alternate cross-link involves residue K35. E36 carries the polyADP-ribosyl glutamic acid modification. Phosphoserine; by AMPK is present on S37. N6-(2-hydroxyisobutyryl)lysine; alternate occurs at positions 44, 47, and 58. Position 44 is an N6-lactoyllysine; alternate (K44). 2 positions are modified to N6-glutaryllysine; alternate: K44 and K47. K47 is subject to N6-methyllysine; alternate. Residue K58 is modified to N6,N6-dimethyllysine; alternate. R80 is subject to Dimethylated arginine. The residue at position 86 (K86) is an N6-(2-hydroxyisobutyryl)lysine; alternate. K86 carries the post-translational modification N6-(beta-hydroxybutyryl)lysine; alternate. An N6-acetyllysine; alternate modification is found at K86. K86 is subject to N6-lactoyllysine; alternate. K86 carries the N6,N6,N6-trimethyllysine; alternate modification. Omega-N-methylarginine is present on residues R87 and R93. An N6-(2-hydroxyisobutyryl)lysine; alternate modification is found at K109. K109 carries the N6-lactoyllysine; alternate modification. Residue K109 is modified to N6-glutaryllysine; alternate. At K109 the chain carries N6-methyllysine; alternate. A glycan (O-linked (GlcNAc) serine) is linked at S113. At T116 the chain carries Phosphothreonine. 2 positions are modified to N6-(2-hydroxyisobutyryl)lysine; alternate: K117 and K121. Residues K117 and K121 each carry the N6-(beta-hydroxybutyryl)lysine; alternate modification. Residues K117 and K121 each carry the N6-lactoyllysine; alternate modification. N6-glutaryllysine; alternate occurs at positions 117 and 121. N6-succinyllysine; alternate is present on residues K117 and K121. Residue K117 is modified to N6-malonyllysine; alternate. K117 is modified (N6-methylated lysine; alternate). K121 participates in a covalent cross-link: Glycyl lysine isopeptide (Lys-Gly) (interchain with G-Cter in ubiquitin); alternate.

This sequence belongs to the histone H2B family. The nucleosome is a histone octamer containing two molecules each of H2A, H2B, H3 and H4 assembled in one H3-H4 heterotetramer and two H2A-H2B heterodimers. The octamer wraps approximately 147 bp of DNA. In terms of processing, monoubiquitination at Lys-35 (H2BK34Ub) by the MSL1/MSL2 dimer is required for histone H3 'Lys-4' (H3K4me) and 'Lys-79' (H3K79me) methylation and transcription activation at specific gene loci, such as HOXA9 and MEIS1 loci. Similarly, monoubiquitination at Lys-121 (H2BK120Ub) by the RNF20/40 complex gives a specific tag for epigenetic transcriptional activation and is also prerequisite for histone H3 'Lys-4' and 'Lys-79' methylation. It also functions cooperatively with the FACT dimer to stimulate elongation by RNA polymerase II. H2BK120Ub also acts as a regulator of mRNA splicing: deubiquitination by USP49 is required for efficient cotranscriptional splicing of a large set of exons. Phosphorylation at Ser-37 (H2BS36ph) by AMPK in response to stress promotes transcription. Phosphorylated on Ser-15 (H2BS14ph) by STK4/MST1 during apoptosis; which facilitates apoptotic chromatin condensation. Also phosphorylated on Ser-15 in response to DNA double strand breaks (DSBs), and in correlation with somatic hypermutation and immunoglobulin class-switch recombination. Post-translationally, glcNAcylation at Ser-113 promotes monoubiquitination of Lys-121. It fluctuates in response to extracellular glucose, and associates with transcribed genes. In terms of processing, ADP-ribosylated by PARP1 or PARP2 on Ser-7 (H2BS6ADPr) in response to DNA damage. H2BS6ADPr promotes recruitment of CHD1L. Poly ADP-ribosylation on Glu-36 (H2BE35ADPr) by PARP1 regulates adipogenesis: it inhibits phosphorylation at Ser-37 (H2BS36ph), thereby blocking expression of pro-adipogenetic genes. Crotonylation (Kcr) is specifically present in male germ cells and marks testis-specific genes in post-meiotic cells, including X-linked genes that escape sex chromosome inactivation in haploid cells. Crotonylation marks active promoters and enhancers and confers resistance to transcriptional repressors. It is also associated with post-meiotically activated genes on autosomes. Post-translationally, lactylated in macrophages by EP300/P300 by using lactoyl-CoA directly derived from endogenous or exogenous lactate, leading to stimulates gene transcription.

It is found in the nucleus. The protein resides in the chromosome. Its function is as follows. Core component of nucleosome. Nucleosomes wrap and compact DNA into chromatin, limiting DNA accessibility to the cellular machineries which require DNA as a template. Histones thereby play a central role in transcription regulation, DNA repair, DNA replication and chromosomal stability. DNA accessibility is regulated via a complex set of post-translational modifications of histones, also called histone code, and nucleosome remodeling. The sequence is that of Histone H2B type 1-O from Homo sapiens (Human).